Here is a 120-residue protein sequence, read N- to C-terminus: NAD(P)H-quinone oxidoreductase subunit 3, chloroplastic (120 aa).

3 helical membrane-spanning segments follow: residues 10 to 30 (FLVF…ASKL), 64 to 84 (MFAL…PWAV), and 89 to 109 (MGFI…VGLV).

It belongs to the complex I subunit 3 family. As to quaternary structure, NDH is composed of at least 16 different subunits, 5 of which are encoded in the nucleus.

It localises to the plastid. The protein localises to the chloroplast thylakoid membrane. It catalyses the reaction a plastoquinone + NADH + (n+1) H(+)(in) = a plastoquinol + NAD(+) + n H(+)(out). It carries out the reaction a plastoquinone + NADPH + (n+1) H(+)(in) = a plastoquinol + NADP(+) + n H(+)(out). Functionally, NDH shuttles electrons from NAD(P)H:plastoquinone, via FMN and iron-sulfur (Fe-S) centers, to quinones in the photosynthetic chain and possibly in a chloroplast respiratory chain. The immediate electron acceptor for the enzyme in this species is believed to be plastoquinone. Couples the redox reaction to proton translocation, and thus conserves the redox energy in a proton gradient. This is NAD(P)H-quinone oxidoreductase subunit 3, chloroplastic from Chlorokybus atmophyticus (Soil alga).